The following is a 180-amino-acid chain: Inner membrane-spanning protein YciB (180 aa).

The next 5 helical transmembrane spans lie at 25–45 (QNAT…CYII), 49–69 (VSKL…ITLI), 76–96 (IKIK…MSGI), 118–138 (IILS…NEVV), and 150–170 (FKVF…LPLL).

Belongs to the YciB family.

It is found in the cell inner membrane. In terms of biological role, plays a role in cell envelope biogenesis, maintenance of cell envelope integrity and membrane homeostasis. In Rickettsia prowazekii (strain Madrid E), this protein is Inner membrane-spanning protein YciB.